We begin with the raw amino-acid sequence, 386 residues long: S-adenosylmethionine synthase (386 aa).

Histidine 16 contributes to the ATP binding site. Aspartate 18 lines the Mg(2+) pocket. Glutamate 44 serves as a coordination point for K(+). L-methionine-binding residues include glutamate 57 and glutamine 100. The tract at residues 100–110 is flexible loop; sequence QSGDIAMGVDE. Residues 165-167, aspartate 240, 246-247, alanine 263, and lysine 267 contribute to the ATP site; these read DAK and RK. Aspartate 240 lines the L-methionine pocket. An L-methionine-binding site is contributed by lysine 271.

Belongs to the AdoMet synthase family. In terms of assembly, homotetramer; dimer of dimers. Mg(2+) serves as cofactor. It depends on K(+) as a cofactor.

It localises to the cytoplasm. The enzyme catalyses L-methionine + ATP + H2O = S-adenosyl-L-methionine + phosphate + diphosphate. The protein operates within amino-acid biosynthesis; S-adenosyl-L-methionine biosynthesis; S-adenosyl-L-methionine from L-methionine: step 1/1. Catalyzes the formation of S-adenosylmethionine (AdoMet) from methionine and ATP. The overall synthetic reaction is composed of two sequential steps, AdoMet formation and the subsequent tripolyphosphate hydrolysis which occurs prior to release of AdoMet from the enzyme. The protein is S-adenosylmethionine synthase of Hahella chejuensis (strain KCTC 2396).